The following is a 367-amino-acid chain: tRNA/tmRNA (uracil-C(5))-methyltransferase (367 aa).

S-adenosyl-L-methionine-binding residues include glutamine 190, tyrosine 218, asparagine 223, glutamate 239, and aspartate 299. Cysteine 324 serves as the catalytic Nucleophile. Glutamate 358 functions as the Proton acceptor in the catalytic mechanism.

It belongs to the class I-like SAM-binding methyltransferase superfamily. RNA M5U methyltransferase family. TrmA subfamily.

It catalyses the reaction uridine(54) in tRNA + S-adenosyl-L-methionine = 5-methyluridine(54) in tRNA + S-adenosyl-L-homocysteine + H(+). It carries out the reaction uridine(341) in tmRNA + S-adenosyl-L-methionine = 5-methyluridine(341) in tmRNA + S-adenosyl-L-homocysteine + H(+). Functionally, dual-specificity methyltransferase that catalyzes the formation of 5-methyluridine at position 54 (m5U54) in all tRNAs, and that of position 341 (m5U341) in tmRNA (transfer-mRNA). This chain is tRNA/tmRNA (uracil-C(5))-methyltransferase, found in Musicola paradisiaca (strain Ech703) (Dickeya paradisiaca).